Reading from the N-terminus, the 179-residue chain is Acireductone dioxygenase (179 aa).

Residues H88, H90, E94, and H133 each contribute to the Fe(2+) site. Residues H88, H90, E94, and H133 each coordinate Ni(2+).

This sequence belongs to the acireductone dioxygenase (ARD) family. Monomer. Interacts with MMP14. Fe(2+) serves as cofactor. Requires Ni(2+) as cofactor.

The protein localises to the cytoplasm. It localises to the nucleus. Its subcellular location is the cell membrane. It catalyses the reaction 1,2-dihydroxy-5-(methylsulfanyl)pent-1-en-3-one + O2 = 4-methylsulfanyl-2-oxobutanoate + formate + 2 H(+). The enzyme catalyses 1,2-dihydroxy-5-(methylsulfanyl)pent-1-en-3-one + O2 = 3-(methylsulfanyl)propanoate + CO + formate + 2 H(+). It functions in the pathway amino-acid biosynthesis; L-methionine biosynthesis via salvage pathway; L-methionine from S-methyl-5-thio-alpha-D-ribose 1-phosphate: step 5/6. In terms of biological role, catalyzes 2 different reactions between oxygen and the acireductone 1,2-dihydroxy-3-keto-5-methylthiopentene (DHK-MTPene) depending upon the metal bound in the active site. Fe-containing acireductone dioxygenase (Fe-ARD) produces formate and 2-keto-4-methylthiobutyrate (KMTB), the alpha-ketoacid precursor of methionine in the methionine recycle pathway. Ni-containing acireductone dioxygenase (Ni-ARD) produces methylthiopropionate, carbon monoxide and formate, and does not lie on the methionine recycle pathway. The polypeptide is Acireductone dioxygenase (adi1) (Xenopus laevis (African clawed frog)).